The sequence spans 556 residues: (6-4)DNA photolyase (556 aa).

Residues 24–162 (SGSLIWFRKG…EVFSPVSHTL (139 aa)) form the Photolyase/cryptochrome alpha/beta domain. E262 contacts phosphate. FAD contacts are provided by residues K263, 276–280 (TTVMS), 317–321 (QLLWR), 380–383 (WMHH), R386, 415–417 (DSD), and N421. W320 serves as a coordination point for DNA. Residues 382–387 (HHLARH) are interaction with DNA. W427 contacts DNA. The segment at 534–556 (LRRKLQKDEHEESKIRNQRPKLK) is disordered. Residues 539-548 (QKDEHEESKI) show a composition bias toward basic and acidic residues.

It belongs to the DNA photolyase class-1 family. FAD is required as a cofactor. As to expression, expressed in siliques, flowers and leaves. Not detected in roots.

The enzyme catalyses (6-4) photoproduct (in DNA) = 2 pyrimidine residues (in DNA).. Its function is as follows. Involved in repair of UV radiation-induced DNA damage. Catalyzes the photoreactivation of pyrimidine [6-4] pyrimidone photoproduct (6-4 products). Binds specifically to DNA containing 6-4 products and repairs these lesions in a visible light-dependent manner. Not required for repair of cyclobutane pyrimidine dimer (CPD). This is (6-4)DNA photolyase (UVR3) from Arabidopsis thaliana (Mouse-ear cress).